The chain runs to 304 residues: Urease accessory protein UreD 2 (304 aa).

The protein belongs to the UreD family. UreD, UreF and UreG form a complex that acts as a GTP-hydrolysis-dependent molecular chaperone, activating the urease apoprotein by helping to assemble the nickel containing metallocenter of UreC. The UreE protein probably delivers the nickel.

The protein resides in the cytoplasm. In terms of biological role, required for maturation of urease via the functional incorporation of the urease nickel metallocenter. Disrupting the ure2 operon has no effect on urease activity or pathogen survival in BALB/c mice when administered orally. The chain is Urease accessory protein UreD 2 from Brucella abortus (strain 2308).